We begin with the raw amino-acid sequence, 949 residues long: Sensor histidine kinase RcsC (949 aa).

Residues 1-19 (MKYLASFRTTLKASRYMFR) are Cytoplasmic-facing. A helical membrane pass occupies residues 20–41 (ALALVLWLLIAFSSVFYIVNAL). Over 42–313 (HQRESEIRQE…PVDKVLERIR (272 aa)) the chain is Periplasmic. Residues 314-335 (MLILNAILLNVLAGAALFTLAR) form a helical membrane-spanning segment. Residues 336 to 949 (MYERRIFIPA…AERVRKSRDS (614 aa)) are Cytoplasmic-facing. The PAS domain occupies 357 to 425 (QFNRKIVASA…VLTSNNTNLQ (69 aa)). Residues 476–692 (TVSHELRTPL…QFTVRIPLYG (217 aa)) form the Histidine kinase domain. A Phosphohistidine; by autocatalysis modification is found at His479. An ABL domain is found at 705–805 (SGKRCWLAVR…ARIYLIEMES (101 aa)). The 115-residue stretch at 826 to 940 (MILVVDDHPI…VIKQTLTLYA (115 aa)) folds into the Response regulatory domain. Asp875 is subject to 4-aspartylphosphate.

The protein belongs to the RcsC family. Interacts with RcsD. Autophosphorylated. Activation probably requires a transfer of a phosphate group from a His in the transmitter domain to an Asp in the receiver domain.

Its subcellular location is the cell inner membrane. It carries out the reaction ATP + protein L-histidine = ADP + protein N-phospho-L-histidine.. With respect to regulation, the Rcs phosphorelay may be activated by RcsF. DjlA, LolA and OmpG might act as a regulator of the phosphorelay. Activity is probably up-regulated by YmgA/AriR, and possibly down-regulated by YcgZ, all 3 are connector proteins providing additional signal input into signaling system. Its function is as follows. Component of the Rcs signaling system, which controls transcription of numerous genes. RcsC functions as a membrane-associated protein kinase that phosphorylates RcsD in response to environmental signals. The phosphoryl group is then transferred to the response regulator RcsB. RcsC also has phosphatase activity. The system controls expression of genes involved in colanic acid capsule synthesis, biofilm formation and cell division. In Escherichia coli (strain K12), this protein is Sensor histidine kinase RcsC.